Consider the following 107-residue polypeptide: Large ribosomal subunit protein P2-A (107 aa).

Residues 85 to 107 (GAAAPAAAAEEEEDDDMGFGLFD) are disordered.

This sequence belongs to the eukaryotic ribosomal protein P1/P2 family. P1 and P2 exist as dimers at the large ribosomal subunit. In terms of processing, phosphorylated.

In terms of biological role, plays an important role in the elongation step of protein synthesis. This Trypanosoma cruzi protein is Large ribosomal subunit protein P2-A.